The following is a 299-amino-acid chain: MKPNVQQVKTFLMQLQDDICQKLSAVDGGEFHEDSWQREAGGGGRSRVLRNGGVFEQAGVNFSHVHGDAMPASATAHRPELAGRSFEAMGVSLVVHPQSPFVPTSHANVRFFIAEKPGADPVWWFGGGFDLTPYYGFEEDAVHWHRTARDICQPFGEEVYPKYKKWCDDYFYLKHRDEQRGIGGLFFDDLNAPDFDTAFNFMQAVGQGYTDAYLPIVERRRNTDYGVREREFQLYRRGRYVEFNLVWDRGTLFGLQTGGRTESILMSMPPLVRWEYSFEPKEGSPEAALAEFIKVRDWI.

S92 contributes to the substrate binding site. A divalent metal cation is bound by residues H96 and H106. The Proton donor role is filled by H106. 108–110 (NVR) contacts substrate. Residues H145 and H175 each coordinate a divalent metal cation. The interval 240–275 (YVEFNLVWDRGTLFGLQTGGRTESILMSMPPLVRWE) is important for dimerization. Residue 258–260 (GGR) coordinates substrate.

It belongs to the aerobic coproporphyrinogen-III oxidase family. In terms of assembly, homodimer. The cofactor is a divalent metal cation.

It is found in the cytoplasm. It catalyses the reaction coproporphyrinogen III + O2 + 2 H(+) = protoporphyrinogen IX + 2 CO2 + 2 H2O. The protein operates within porphyrin-containing compound metabolism; protoporphyrin-IX biosynthesis; protoporphyrinogen-IX from coproporphyrinogen-III (O2 route): step 1/1. In terms of biological role, involved in the heme biosynthesis. Catalyzes the aerobic oxidative decarboxylation of propionate groups of rings A and B of coproporphyrinogen-III to yield the vinyl groups in protoporphyrinogen-IX. This Enterobacter sp. (strain 638) protein is Oxygen-dependent coproporphyrinogen-III oxidase.